Consider the following 288-residue polypeptide: ATP synthase gamma chain (288 aa).

The protein belongs to the ATPase gamma chain family. As to quaternary structure, F-type ATPases have 2 components, CF(1) - the catalytic core - and CF(0) - the membrane proton channel. CF(1) has five subunits: alpha(3), beta(3), gamma(1), delta(1), epsilon(1). CF(0) has three main subunits: a, b and c.

It localises to the cell membrane. In terms of biological role, produces ATP from ADP in the presence of a proton gradient across the membrane. The gamma chain is believed to be important in regulating ATPase activity and the flow of protons through the CF(0) complex. In Staphylococcus aureus (strain Mu3 / ATCC 700698), this protein is ATP synthase gamma chain.